A 417-amino-acid chain; its full sequence is Multifunctional CCA protein (417 aa).

Residues Gly-8 and Arg-11 each coordinate ATP. The CTP site is built by Gly-8 and Arg-11. 2 residues coordinate Mg(2+): Asp-21 and Asp-23. Arg-91, Arg-137, and Arg-140 together coordinate ATP. CTP contacts are provided by Arg-91, Arg-137, and Arg-140. One can recognise an HD domain in the interval 225–326 (SGIHTLMTLQ…LNVLKKTDAF (102 aa)).

It belongs to the tRNA nucleotidyltransferase/poly(A) polymerase family. Bacterial CCA-adding enzyme type 1 subfamily. In terms of assembly, monomer. Can also form homodimers and oligomers. Mg(2+) serves as cofactor. Ni(2+) is required as a cofactor.

It catalyses the reaction a tRNA precursor + 2 CTP + ATP = a tRNA with a 3' CCA end + 3 diphosphate. It carries out the reaction a tRNA with a 3' CCA end + 2 CTP + ATP = a tRNA with a 3' CCACCA end + 3 diphosphate. Catalyzes the addition and repair of the essential 3'-terminal CCA sequence in tRNAs without using a nucleic acid template. Adds these three nucleotides in the order of C, C, and A to the tRNA nucleotide-73, using CTP and ATP as substrates and producing inorganic pyrophosphate. tRNA 3'-terminal CCA addition is required both for tRNA processing and repair. Also involved in tRNA surveillance by mediating tandem CCA addition to generate a CCACCA at the 3' terminus of unstable tRNAs. While stable tRNAs receive only 3'-terminal CCA, unstable tRNAs are marked with CCACCA and rapidly degraded. The polypeptide is Multifunctional CCA protein (Neisseria meningitidis serogroup C / serotype 2a (strain ATCC 700532 / DSM 15464 / FAM18)).